A 494-amino-acid polypeptide reads, in one-letter code: Smoothelin-like protein 1 (494 aa).

Basic and acidic residues-rich tracts occupy residues 1-10 (MEQKEGKLSE), 74-104 (DEVK…KEET), 112-166 (TGRK…KATV), and 179-232 (TGQR…KEEA). A disordered region spans residues 1-348 (MEQKEGKLSE…ARPRGPRAQN (348 aa)). Positions 123–145 (KEAEEKESTLASEKQKAEEKEAK) form a coiled coil. A compositionally biased stretch (acidic residues) spans 233–255 (DAKEEAEDAEEAEPGSPSEEQEQ). 2 stretches are compositionally biased toward low complexity: residues 269–279 (PSSPEEWPESP) and 302–314 (SPSA…SDVP). A compositionally biased stretch (basic and acidic residues) spans 324-335 (GEKKEKAPERRV). Ser-336 bears the Phosphoserine mark. The Calponin-homology (CH) domain occupies 378 to 484 (GGVKNMLLEW…YIQELYRSLV (107 aa)). A calmodulin-binding region spans residues 476–494 (IQELYRSLVQKGLVKTKKK).

Belongs to the smoothelin family. As to quaternary structure, interacts with PPP1R12A. Post-translationally, maximal phosphorylation of Ser-336 correlates with maximal relaxation of aorta in response to acetylcholine. Expressed in striated muscles, specifically in type 2a fibers (at protein level).

It localises to the cytoplasm. Its subcellular location is the myofibril. The protein resides in the sarcomere. The protein localises to the i band. It is found in the m line. It localises to the nucleus. Its function is as follows. Plays a role in the regulation of contractile properties of both striated and smooth muscles. When unphosphorylated, may inhibit myosin dephosphorylation. Phosphorylation at Ser-299 reduces this inhibitory activity. This Homo sapiens (Human) protein is Smoothelin-like protein 1 (SMTNL1).